Consider the following 804-residue polypeptide: Elongation factor G, mitochondrial (804 aa).

A mitochondrion-targeting transit peptide spans 1–63 (MSMHRVARAV…RHFFQSPIIR (63 aa)). One can recognise a tr-type G domain in the interval 99-385 (RRVRNIGIAA…AVCDYLPNPA (287 aa)). Residues 108–115 (AHIDSGKT), 183–187 (DTPGH), and 237–240 (NKMD) each bind GTP.

Belongs to the TRAFAC class translation factor GTPase superfamily. Classic translation factor GTPase family. EF-G/EF-2 subfamily.

Its subcellular location is the mitochondrion. The protein operates within protein biosynthesis; polypeptide chain elongation. Its function is as follows. Mitochondrial GTPase that catalyzes the GTP-dependent ribosomal translocation step during translation elongation. During this step, the ribosome changes from the pre-translocational (PRE) to the post-translocational (POST) state as the newly formed A-site-bound peptidyl-tRNA and P-site-bound deacylated tRNA move to the P and E sites, respectively. Catalyzes the coordinated movement of the two tRNA molecules, the mRNA and conformational changes in the ribosome. In Sclerotinia sclerotiorum (strain ATCC 18683 / 1980 / Ss-1) (White mold), this protein is Elongation factor G, mitochondrial (mef1).